The primary structure comprises 1097 residues: DNA-directed RNA polymerase subunit beta (1097 aa).

Residues 1072–1097 (QDINPRRNTPSRPTYESLGTSEYEED) form a disordered region. Residues 1077 to 1091 (RRNTPSRPTYESLGT) show a composition bias toward polar residues.

The protein belongs to the RNA polymerase beta chain family. As to quaternary structure, in cyanobacteria the RNAP catalytic core is composed of 2 alpha, 1 beta, 1 beta', 1 gamma and 1 omega subunit. When a sigma factor is associated with the core the holoenzyme is formed, which can initiate transcription.

The enzyme catalyses RNA(n) + a ribonucleoside 5'-triphosphate = RNA(n+1) + diphosphate. DNA-dependent RNA polymerase catalyzes the transcription of DNA into RNA using the four ribonucleoside triphosphates as substrates. The sequence is that of DNA-directed RNA polymerase subunit beta from Prochlorococcus marinus (strain MIT 9215).